We begin with the raw amino-acid sequence, 197 residues long: Imidazoleglycerol-phosphate dehydratase (197 aa).

This sequence belongs to the imidazoleglycerol-phosphate dehydratase family.

It is found in the cytoplasm. It carries out the reaction D-erythro-1-(imidazol-4-yl)glycerol 3-phosphate = 3-(imidazol-4-yl)-2-oxopropyl phosphate + H2O. It participates in amino-acid biosynthesis; L-histidine biosynthesis; L-histidine from 5-phospho-alpha-D-ribose 1-diphosphate: step 6/9. The protein is Imidazoleglycerol-phosphate dehydratase of Pseudomonas putida (strain W619).